We begin with the raw amino-acid sequence, 266 residues long: Streptomycin 3''-kinase (266 aa).

Catalysis depends on Asp-154, which acts as the Proton acceptor.

Belongs to the aminoglycoside phosphotransferase family.

The catalysed reaction is streptomycin + ATP = streptomycin 3''-phosphate + ADP + H(+). In terms of biological role, the aminoglycoside phosphotransferases achieve inactivation of their antibiotic substrates by phosphorylation. The protein is Streptomycin 3''-kinase (str) of Klebsiella pneumoniae.